A 258-amino-acid chain; its full sequence is UPF0246 protein Asuc_0575 (258 aa).

Belongs to the UPF0246 family.

This Actinobacillus succinogenes (strain ATCC 55618 / DSM 22257 / CCUG 43843 / 130Z) protein is UPF0246 protein Asuc_0575.